A 195-amino-acid chain; its full sequence is HTH-type transcriptional regulator BetI (195 aa).

Residues 8-68 (SIRRRQLIDA…ATMRDITSQL (61 aa)) form the HTH tetR-type domain. Positions 31 to 50 (TIAQIARRAGVSTGIISHYF) form a DNA-binding region, H-T-H motif.

Its pathway is amine and polyamine biosynthesis; betaine biosynthesis via choline pathway [regulation]. Repressor involved in the biosynthesis of the osmoprotectant glycine betaine. It represses transcription of the choline transporter BetT and the genes of BetAB involved in the synthesis of glycine betaine. The chain is HTH-type transcriptional regulator BetI from Escherichia coli O8 (strain IAI1).